The following is a 72-amino-acid chain: Small, acid-soluble spore protein C (72 aa).

This sequence belongs to the alpha/beta-type SASP family.

Functionally, SASP are bound to spore DNA. They are double-stranded DNA-binding proteins that cause DNA to change to an a-like conformation. They protect the DNA backbone from chemical and enzymatic cleavage and are thus involved in dormant spore's high resistance to UV light. In Bacillus subtilis (strain 168), this protein is Small, acid-soluble spore protein C (sspC).